A 153-amino-acid chain; its full sequence is MIKSWWAEKSTSEKQIVAALAVLSLGVFCWLGVIKPIDTYIAEHQSHAQKIKKDIKWMQDQASTHGLLGHPALTQPIKNILLEEAKRENLAITLENGPDNTLTIHPVTAPLENVSRWLTTAQVTYGIVIEDLQFTLAGNEEITLRHLSFREQQ.

Topologically, residues 1 to 16 (MIKSWWAEKSTSEKQI) are cytoplasmic. The helical transmembrane segment at 17 to 37 (VAALAVLSLGVFCWLGVIKPI) threads the bilayer. At 38-153 (DTYIAEHQSH…LRHLSFREQQ (116 aa)) the chain is on the periplasmic side.

Belongs to the GSP M family. As to quaternary structure, type II secretion system is composed of four main components: the outer membrane complex, the inner membrane complex, the cytoplasmic secretion ATPase and the periplasm-spanning pseudopilus. Forms homodimers. Interacts with GspL. Interacts with GspE and GspF.

Its subcellular location is the cell inner membrane. Its function is as follows. Inner membrane component of the type II secretion system required for the energy-dependent secretion of extracellular factors such as proteases and toxins from the periplasm. Plays a role in the complex assembly and recruits GspL resulting in a stable complex in the inner membrane. Provides thus a link between the energy-providing GspE protein in the cytoplasm and the rest of the T2SS machinery. The chain is Putative type II secretion system protein M (gspM) from Escherichia coli (strain K12).